Here is a 244-residue protein sequence, read N- to C-terminus: 6-carboxyhexanoate--CoA ligase (244 aa).

It belongs to the BioW family. As to quaternary structure, homodimer. Mg(2+) serves as cofactor.

It catalyses the reaction heptanedioate + ATP + CoA = 6-carboxyhexanoyl-CoA + AMP + diphosphate. Its pathway is metabolic intermediate metabolism; pimeloyl-CoA biosynthesis; pimeloyl-CoA from pimelate: step 1/1. Catalyzes the transformation of pimelate into pimeloyl-CoA with concomitant hydrolysis of ATP to AMP. The chain is 6-carboxyhexanoate--CoA ligase from Methanococcus maripaludis (strain C7 / ATCC BAA-1331).